The sequence spans 35 residues: Beta/omega-theraphotoxin-Bp1a (35 aa).

Intrachain disulfides connect Cys2–Cys16, Cys9–Cys21, and Cys15–Cys28.

Belongs to the neurotoxin 10 (Hwtx-1) family. 54 (ProTx-1) subfamily. In terms of processing, an unnatural amidation at Ser-35 provokes a 14-fold increased toxin ability to inhibit Nav1.2/SCN2A and a ~2-fold decreased toxin ability to inhibit both Nav1.5/SCN5A and Nav1.7/SCN9A. As to expression, expressed by the venom gland.

Its subcellular location is the secreted. Ion channel impairing toxin that inhibits voltage-gated calcium channel Cav3.1/CACNA1G (IC(50)=53 nM), voltage-gated potassium channels Kv2.1/KCNB1 (IC(50)=411 nM), all sodium channels tested (Nav1.2/SCN2A (IC(50)=60-104 nM), Nav1.5/SCN5A (IC(50)=76-358 nM), Nav1.6/SCN8A (IC(50)=21-133 nM), Nav1.7/SCN9A (IC(50)=51-95 nM), and Nav1.8/SCN10A) as well as the nociceptor cation channel TRPA1 (IC(50)=389 nM). Acts as a potent and selective blocker of voltage-gated calcium channel Cav3.1/CACNA1G, but not of Cav3.2/CACNA1H, and Cav3.3/CACNA1I. On Nav1.7/SCN9A, primarily interacts with the DII and DIV voltage-sensor domains. Also acts as an inhibitor of nociceptor cation channel TRPA1 (IC(50)~389 nM) by binding to the S1-S4 gating domain of TRPA1. It shows moderate affinity for lipid bilayers. This Bumba pulcherrimaklaasi (Tarantula spider) protein is Beta/omega-theraphotoxin-Bp1a.